Reading from the N-terminus, the 567-residue chain is Cytochrome P450 monooxygenase 231 (567 aa).

Residues 3–23 (VSTNELAILAIVLLATGVLFY) traverse the membrane as a helical segment. Residues N81 and N223 are each glycosylated (N-linked (GlcNAc...) asparagine). Residue C475 coordinates heme.

The protein belongs to the cytochrome P450 family. Heme serves as cofactor.

The protein localises to the membrane. The protein operates within secondary metabolite biosynthesis. Cytochrome P450 monooxygenase that is able to use anthracene, carbazole, pyrene, and phenanthrene as substrates for oxidation. These multifunctional properties against a series of polycyclic aromatic hydrocarbons (PAHs) suggest that CYP231 would play important roles, at least in part, in fungal metabolic systems involved in xenobiotic detoxification. The polypeptide is Cytochrome P450 monooxygenase 231 (Postia placenta (strain ATCC 44394 / Madison 698-R) (Brown rot fungus)).